The following is a 78-amino-acid chain: Protein SlyX homolog (78 aa).

Belongs to the SlyX family.

In Xanthomonas axonopodis pv. citri (strain 306), this protein is Protein SlyX homolog.